Consider the following 91-residue polypeptide: MAHKKGAASSNNGRDSESKRLGVKRFGGQQVKAGEILVRQRGTSFHPGENVGRGGDDTLFALKAGAVQFARKRNRRTVNIVENVEAEPAKA.

The disordered stretch occupies residues 1–25 (MAHKKGAASSNNGRDSESKRLGVKR).

The protein belongs to the bacterial ribosomal protein bL27 family.

The sequence is that of Large ribosomal subunit protein bL27 from Corynebacterium kroppenstedtii (strain DSM 44385 / JCM 11950 / CIP 105744 / CCUG 35717).